The following is a 346-amino-acid chain: Glycerol-3-phosphate dehydrogenase [NAD(P)+] (346 aa).

Residues Ser-15, Trp-16, Arg-36, and Lys-110 each contribute to the NADPH site. 3 residues coordinate sn-glycerol 3-phosphate: Lys-110, Gly-139, and Ser-141. NADPH is bound at residue Ala-143. Sn-glycerol 3-phosphate is bound by residues Lys-194, Asp-247, Ser-257, Arg-258, and Asn-259. The active-site Proton acceptor is Lys-194. Arg-258 serves as a coordination point for NADPH. NADPH is bound by residues Val-282 and Glu-284.

It belongs to the NAD-dependent glycerol-3-phosphate dehydrogenase family.

It localises to the cytoplasm. The catalysed reaction is sn-glycerol 3-phosphate + NAD(+) = dihydroxyacetone phosphate + NADH + H(+). The enzyme catalyses sn-glycerol 3-phosphate + NADP(+) = dihydroxyacetone phosphate + NADPH + H(+). It participates in membrane lipid metabolism; glycerophospholipid metabolism. Catalyzes the reduction of the glycolytic intermediate dihydroxyacetone phosphate (DHAP) to sn-glycerol 3-phosphate (G3P), the key precursor for phospholipid synthesis. The protein is Glycerol-3-phosphate dehydrogenase [NAD(P)+] of Xylella fastidiosa (strain M23).